Here is a 346-residue protein sequence, read N- to C-terminus: Blue-light-activated histidine kinase 2 (346 aa).

The PAS domain occupies 8-82; the sequence is HDKEAWGRLP…KAIRNCEEVE (75 aa). Cys55 carries the post-translational modification S-4a-FMN cysteine. A PAC domain is found at 79-133; the sequence is EEVEETIYNYRADGEGFWNHLLMGPLEDQDEKCRYFVGIQVDMGQSESPDRATEL. The 196-residue stretch at 139–334 folds into the Histidine kinase domain; the sequence is EVQHRVKNHL…IVNIDIPLSQ (196 aa). Residue His142 is modified to Phosphohistidine; by autocatalysis.

FMN binds covalently to cysteine after exposure to blue light and this bond is spontaneously broken in the dark.

It catalyses the reaction ATP + protein L-histidine = ADP + protein N-phospho-L-histidine.. Functionally, photosensitive kinase that is involved in increased bacterial virulence upon exposure to light. This is Blue-light-activated histidine kinase 2 from Erythrobacter litoralis (strain HTCC2594).